A 651-amino-acid chain; its full sequence is Probable potassium transport system protein Kup (651 aa).

The next 12 helical transmembrane spans lie at 41–61 (LVLG…IYAF), 82–102 (VVSL…VLFV), 130–150 (LILG…VITP), 163–183 (IVAP…LVTL), 194–214 (VAIV…ASGL), 235–255 (FLTV…LAMT), 276–296 (WLWI…AFIL), 309–329 (MIPS…TVIA), 366–386 (IYIP…VLGF), 395–415 (AYGI…YIVM), 426–446 (ALPI…ANII), and 450–470 (EGGW…WTWV).

Belongs to the HAK/KUP transporter (TC 2.A.72) family.

The protein resides in the cell inner membrane. It catalyses the reaction K(+)(in) + H(+)(in) = K(+)(out) + H(+)(out). Its function is as follows. Transport of potassium into the cell. Likely operates as a K(+):H(+) symporter. This Brucella melitensis biotype 1 (strain ATCC 23456 / CCUG 17765 / NCTC 10094 / 16M) protein is Probable potassium transport system protein Kup.